Reading from the N-terminus, the 852-residue chain is Bifunctional uridylyltransferase/uridylyl-removing enzyme (852 aa).

The segment at 1–318 is uridylyltransferase; the sequence is MPANLSSALE…STPLRVTLRI (318 aa). Residues 319-672 are uridylyl-removing; sequence DDDYIQVNNQ…SRILPKSDSF (354 aa). An HD domain is found at 436–558; that stretch reads VDDHILTVVR…VQTHERLSAL (123 aa). 2 ACT domains span residues 673–757 and 785–852; these read QVMV…SRSR and SVEI…EQLS.

Belongs to the GlnD family. Mg(2+) serves as cofactor.

The catalysed reaction is [protein-PII]-L-tyrosine + UTP = [protein-PII]-uridylyl-L-tyrosine + diphosphate. It carries out the reaction [protein-PII]-uridylyl-L-tyrosine + H2O = [protein-PII]-L-tyrosine + UMP + H(+). Its activity is regulated as follows. Uridylyltransferase (UTase) activity is inhibited by glutamine, while glutamine activates uridylyl-removing (UR) activity. Its function is as follows. Modifies, by uridylylation and deuridylylation, the PII regulatory proteins (GlnB and homologs), in response to the nitrogen status of the cell that GlnD senses through the glutamine level. Under low glutamine levels, catalyzes the conversion of the PII proteins and UTP to PII-UMP and PPi, while under higher glutamine levels, GlnD hydrolyzes PII-UMP to PII and UMP (deuridylylation). Thus, controls uridylylation state and activity of the PII proteins, and plays an important role in the regulation of nitrogen assimilation and metabolism. The chain is Bifunctional uridylyltransferase/uridylyl-removing enzyme from Neisseria meningitidis serogroup B (strain ATCC BAA-335 / MC58).